We begin with the raw amino-acid sequence, 498 residues long: ATP synthase subunit beta, chloroplastic (498 aa).

172–179 (GGAGVGKT) is a binding site for ATP.

It belongs to the ATPase alpha/beta chains family. In terms of assembly, F-type ATPases have 2 components, CF(1) - the catalytic core - and CF(0) - the membrane proton channel. CF(1) has five subunits: alpha(3), beta(3), gamma(1), delta(1), epsilon(1). CF(0) has four main subunits: a(1), b(1), b'(1) and c(9-12).

It localises to the plastid. The protein resides in the chloroplast thylakoid membrane. The enzyme catalyses ATP + H2O + 4 H(+)(in) = ADP + phosphate + 5 H(+)(out). Functionally, produces ATP from ADP in the presence of a proton gradient across the membrane. The catalytic sites are hosted primarily by the beta subunits. This Calycanthus floridus (Eastern sweetshrub) protein is ATP synthase subunit beta, chloroplastic.